Reading from the N-terminus, the 328-residue chain is LOB domain-containing protein 27 (328 aa).

The 102-residue stretch at 35–136 folds into the LOB domain; the sequence is GACAACKYQR…EELKAVNSQL (102 aa).

It belongs to the LOB domain-containing protein family.

In Arabidopsis thaliana (Mouse-ear cress), this protein is LOB domain-containing protein 27 (LBD27).